The primary structure comprises 502 residues: Glycerol kinase (502 aa).

Thr14 serves as a coordination point for ADP. Thr14, Thr15, and Ser16 together coordinate ATP. Thr14 provides a ligand contact to sn-glycerol 3-phosphate. Arg18 serves as a coordination point for ADP. The sn-glycerol 3-phosphate site is built by Arg84, Glu85, Tyr136, and Asp246. The glycerol site is built by Arg84, Glu85, Tyr136, Asp246, and Gln247. ADP-binding residues include Thr268 and Gly311. ATP is bound by residues Thr268, Gly311, Gln315, and Gly412. 2 residues coordinate ADP: Gly412 and Asn416.

This sequence belongs to the FGGY kinase family. Homotetramer and homodimer (in equilibrium). Heterodimer with EIIA-Glc. Binds 1 zinc ion per glycerol kinase EIIA-Glc dimer. The zinc ion is important for dimerization.

It carries out the reaction glycerol + ATP = sn-glycerol 3-phosphate + ADP + H(+). The protein operates within polyol metabolism; glycerol degradation via glycerol kinase pathway; sn-glycerol 3-phosphate from glycerol: step 1/1. With respect to regulation, activity of this regulatory enzyme is affected by several metabolites. Allosterically and non-competitively inhibited by fructose 1,6-bisphosphate (FBP) and unphosphorylated phosphocarrier protein EIIA-Glc (III-Glc), an integral component of the bacterial phosphotransferase (PTS) system. Key enzyme in the regulation of glycerol uptake and metabolism. Catalyzes the phosphorylation of glycerol to yield sn-glycerol 3-phosphate. The chain is Glycerol kinase from Salmonella agona (strain SL483).